Reading from the N-terminus, the 4749-residue chain is Dynein heavy chain domain-containing protein 1 (4749 aa).

Low complexity predominate over residues Met1–Ser18. Disordered regions lie at residues Met1 to Pro27, Glu275 to Ser308, and Glu2690 to Ser2785. Positions Cys2696–Ala2716 are enriched in acidic residues. Over residues Gln2738–Ser2749 the composition is skewed to polar residues. A coiled-coil region spans residues Cys3197–Gln3224. A disordered region spans residues Pro3568 to Ser3667. Residues Ser3578–Ser3593 show a composition bias toward basic and acidic residues. A coiled-coil region spans residues Gly3594 to Glu3636. The span at Asp3595–Ala3612 shows a compositional bias: acidic residues. Over residues Asn3613 to Gly3628 the composition is skewed to basic and acidic residues. A compositionally biased stretch (low complexity) spans Glu3644–Glu3655. Polar residues predominate over residues Thr3656–Ser3667. 2 coiled-coil regions span residues Met3818–Gln3838 and Glu4431–Leu4451.

Belongs to the dynein heavy chain family. In terms of tissue distribution, expressed in spermatozoa (at protein level).

It localises to the cell projection. Its subcellular location is the cilium. The protein localises to the flagellum. Its function is as follows. Essential for the normal function of sperm flagella axonemes. In Mus musculus (Mouse), this protein is Dynein heavy chain domain-containing protein 1 (Dnhd1).